Reading from the N-terminus, the 339-residue chain is Adenosine deaminase (339 aa).

His15 and His17 together coordinate Zn(2+). Substrate-binding residues include His17, Asp19, and Gly172. His199 serves as a coordination point for Zn(2+). Glu202 serves as the catalytic Proton donor. Zn(2+) is bound at residue Asp279.

It belongs to the metallo-dependent hydrolases superfamily. Adenosine and AMP deaminases family. Adenosine deaminase subfamily. It depends on Zn(2+) as a cofactor.

The enzyme catalyses adenosine + H2O + H(+) = inosine + NH4(+). It catalyses the reaction 2'-deoxyadenosine + H2O + H(+) = 2'-deoxyinosine + NH4(+). Functionally, catalyzes the hydrolytic deamination of adenosine and 2-deoxyadenosine. This Lacticaseibacillus casei (strain BL23) (Lactobacillus casei) protein is Adenosine deaminase.